Reading from the N-terminus, the 90-residue chain is Probable Fe(2+)-trafficking protein (90 aa).

The protein belongs to the Fe(2+)-trafficking protein family.

Functionally, could be a mediator in iron transactions between iron acquisition and iron-requiring processes, such as synthesis and/or repair of Fe-S clusters in biosynthetic enzymes. This chain is Probable Fe(2+)-trafficking protein, found in Colwellia psychrerythraea (strain 34H / ATCC BAA-681) (Vibrio psychroerythus).